Here is a 98-residue protein sequence, read N- to C-terminus: Large ribosomal subunit protein uL23 (98 aa).

The protein belongs to the universal ribosomal protein uL23 family. As to quaternary structure, part of the 50S ribosomal subunit. Contacts protein L29, and trigger factor when it is bound to the ribosome.

In terms of biological role, one of the early assembly proteins it binds 23S rRNA. One of the proteins that surrounds the polypeptide exit tunnel on the outside of the ribosome. Forms the main docking site for trigger factor binding to the ribosome. This chain is Large ribosomal subunit protein uL23, found in Thioalkalivibrio sulfidiphilus (strain HL-EbGR7).